Consider the following 156-residue polypeptide: ATP synthase subunit b (156 aa).

The chain crosses the membrane as a helical span at residues 7–29 (LIGQLIAFALFTWFCVKFVWPPI).

The protein belongs to the ATPase B chain family. F-type ATPases have 2 components, F(1) - the catalytic core - and F(0) - the membrane proton channel. F(1) has five subunits: alpha(3), beta(3), gamma(1), delta(1), epsilon(1). F(0) has three main subunits: a(1), b(2) and c(10-14). The alpha and beta chains form an alternating ring which encloses part of the gamma chain. F(1) is attached to F(0) by a central stalk formed by the gamma and epsilon chains, while a peripheral stalk is formed by the delta and b chains.

The protein localises to the cell inner membrane. Its function is as follows. F(1)F(0) ATP synthase produces ATP from ADP in the presence of a proton or sodium gradient. F-type ATPases consist of two structural domains, F(1) containing the extramembraneous catalytic core and F(0) containing the membrane proton channel, linked together by a central stalk and a peripheral stalk. During catalysis, ATP synthesis in the catalytic domain of F(1) is coupled via a rotary mechanism of the central stalk subunits to proton translocation. In terms of biological role, component of the F(0) channel, it forms part of the peripheral stalk, linking F(1) to F(0). The chain is ATP synthase subunit b from Mannheimia succiniciproducens (strain KCTC 0769BP / MBEL55E).